Reading from the N-terminus, the 1376-residue chain is DNA-directed RNA polymerase subunit beta'' (1376 aa).

Zn(2+) contacts are provided by cysteine 221, cysteine 290, cysteine 297, and cysteine 300. The tract at residues 895–919 (PSGSGFPSDNELDHSNRNPFSSSYP) is disordered.

Belongs to the RNA polymerase beta' chain family. RpoC2 subfamily. In terms of assembly, in plastids the minimal PEP RNA polymerase catalytic core is composed of four subunits: alpha, beta, beta', and beta''. When a (nuclear-encoded) sigma factor is associated with the core the holoenzyme is formed, which can initiate transcription. Zn(2+) is required as a cofactor.

It localises to the plastid. Its subcellular location is the chloroplast. The catalysed reaction is RNA(n) + a ribonucleoside 5'-triphosphate = RNA(n+1) + diphosphate. Functionally, DNA-dependent RNA polymerase catalyzes the transcription of DNA into RNA using the four ribonucleoside triphosphates as substrates. In Pelargonium hortorum (Common geranium), this protein is DNA-directed RNA polymerase subunit beta''.